The primary structure comprises 149 residues: UPF0260 protein Pput_1301 (149 aa).

It belongs to the UPF0260 family.

This Pseudomonas putida (strain ATCC 700007 / DSM 6899 / JCM 31910 / BCRC 17059 / LMG 24140 / F1) protein is UPF0260 protein Pput_1301.